A 410-amino-acid chain; its full sequence is Platelet-activating factor acetylhydrolase IB subunit beta (410 aa).

The tract at residues 1 to 38 (MVLSQRQRDELNRAIADYLRSNGYEEAYSVFKKEAELD) is required for self-association and interaction with PAFAH1B2 and PAFAH1B3. The interaction with NDE1 stretch occupies residues 1-66 (MVLSQRQRDE…SVIRLQKKVM (66 aa)). Residues 1–102 (MVLSQRQRDE…EWIPRPPEKY (102 aa)) form an interaction with NDEL1 region. Positions 7–39 (QRDELNRAIADYLRSNGYEEAYSVFKKEAELDM) constitute a LisH domain. Position 53 is an N6-acetyllysine (lysine 53). Residues 56–82 (TSVIRLQKKVMELESKLNEAKEEFTSG) adopt a coiled-coil conformation. Positions 83–410 (GPLGQKRDPK…DQTVKVWECR (328 aa)) are interaction with dynein and dynactin. WD repeat units follow at residues 106-147 (GHRS…RTLK), 148-187 (GHTD…CIRT), 190-229 (GHDH…CVKT), 232-271 (GHRE…CKAE), 274-333 (EHEH…CLMT), 336-377 (GHDN…KTLN), and 378-410 (AHEH…WECR). Serine 109 carries the post-translational modification Phosphoserine. Positions 367 to 409 (YKNKRCMKTLNAHEHFVTSLDFHKTAPYVVTGSVDQTVKVWEC) are interaction with DCX. The interaction with NDEL1 stretch occupies residues 388–410 (FHKTAPYVVTGSVDQTVKVWECR).

Belongs to the WD repeat LIS1/nudF family. As to quaternary structure, can self-associate. Component of the cytosolic PAF-AH (I) heterotetrameric enzyme, which is composed of PAFAH1B1 (beta), PAFAH1B2 (alpha2) and PAFAH1B3 (alpha1) subunits. The catalytic activity of the enzyme resides in the alpha1 (PAFAH1B3) and alpha2 (PAFAH1B2) subunits, whereas the beta subunit (PAFAH1B1) has regulatory activity. Trimer formation is not essential for the catalytic activity. Interacts with the catalytic dimer of PAF-AH (I) heterotetrameric enzyme: interacts with PAFAH1B2 homodimer (alpha2/alpha2 homodimer), PAFAH1B3 homodimer (alpha1/alpha1 homodimer) and PAFAH1B2-PAFAH1B3 heterodimer (alpha2/alpha1 heterodimer). Interacts with DCX, dynein, dynactin, IQGAP1, KATNB1, NDE1, NDEL1, NUDC and RSN. Interacts with DISC1, and this interaction is enhanced by NDEL1. Interacts with DAB1 when DAB1 is phosphorylated in response to RELN/reelin signaling. Interacts with INTS13. Interacts with DCDC1.

The protein localises to the cytoplasm. It localises to the cytoskeleton. The protein resides in the microtubule organizing center. It is found in the centrosome. Its subcellular location is the spindle. The protein localises to the nucleus membrane. Functionally, regulatory subunit (beta subunit) of the cytosolic type I platelet-activating factor (PAF) acetylhydrolase (PAF-AH (I)), an enzyme that catalyzes the hydrolyze of the acetyl group at the sn-2 position of PAF and its analogs and participates in PAF inactivation. Regulates the PAF-AH (I) activity in a catalytic dimer composition-dependent manner. Positively regulates the activity of the minus-end directed microtubule motor protein dynein. May enhance dynein-mediated microtubule sliding by targeting dynein to the microtubule plus end. Required for several dynein- and microtubule-dependent processes such as the maintenance of Golgi integrity, the peripheral transport of microtubule fragments and the coupling of the nucleus and centrosome. Required during brain development for the proliferation of neuronal precursors and the migration of newly formed neurons from the ventricular/subventricular zone toward the cortical plate. Neuronal migration involves a process called nucleokinesis, whereby migrating cells extend an anterior process into which the nucleus subsequently translocates. During nucleokinesis dynein at the nuclear surface may translocate the nucleus towards the centrosome by exerting force on centrosomal microtubules. Also required for proper activation of Rho GTPases and actin polymerization at the leading edge of locomoting cerebellar neurons and postmigratory hippocampal neurons in response to calcium influx triggered via NMDA receptors. May also play a role in other forms of cell locomotion including the migration of fibroblasts during wound healing. Required for dynein recruitment to microtubule plus ends and BICD2-bound cargos. May modulate the Reelin pathway through interaction of the PAF-AH (I) catalytic dimer with VLDLR. This chain is Platelet-activating factor acetylhydrolase IB subunit beta, found in Felis catus (Cat).